The following is a 303-amino-acid chain: ADP-ribosyl cyclase/cyclic ADP-ribose hydrolase 1 (303 aa).

Topologically, residues 1–21 are cytoplasmic; that stretch reads MANYEFSQVSEDRPGCRLTRK. A helical; Signal-anchor for type II membrane protein membrane pass occupies residues 22–44; it reads AQIGLGVGLLLLVALVVVVVIVL. Residues 45–303 are Extracellular-facing; it reads WPRSPLVWKG…PEHPSCRLNV (259 aa). Disulfide bonds link cysteine 69–cysteine 85, cysteine 102–cysteine 183, and cysteine 163–cysteine 176. Asparagine 103 carries N-linked (GlcNAc...) asparagine glycosylation. Cysteine 122 is a catalytic residue. A glycan (N-linked (GlcNAc...) asparagine) is linked at asparagine 123. The active site involves cysteine 204. N-linked (GlcNAc...) asparagine glycans are attached at residues asparagine 212 and asparagine 222. Disulfide bonds link cysteine 257/cysteine 278 and cysteine 290/cysteine 299.

This sequence belongs to the ADP-ribosyl cyclase family. In terms of assembly, homodimer. Spleen, liver, heart, thymus, thyroid gland, ileum, colon, cerebellum, salivary gland, adrenal gland, jejunum, islets of Langerhans and osteoclasts.

The protein localises to the cell membrane. The enzyme catalyses NAD(+) = cyclic ADP-beta-D-ribose + nicotinamide + H(+). It carries out the reaction nicotinate + NADP(+) = nicotinate-adenine dinucleotide phosphate + nicotinamide. It catalyses the reaction NAD(+) + H2O = ADP-D-ribose + nicotinamide + H(+). Both NAADP and cADPR synthesis are inhibited by nicotinic acid. Functionally, synthesizes the second messengers cyclic ADP-ribose and nicotinate-adenine dinucleotide phosphate, the former a second messenger for glucose-induced insulin secretion, the latter a Ca(2+) mobilizer. Also has cADPR hydrolase activity. In terms of biological role, regulates osteoclastic bone resorption, probably via production of cyclic ADP-ribose and triggering of a cytosolic calcium ion signal through ryanodine receptor activation. The polypeptide is ADP-ribosyl cyclase/cyclic ADP-ribose hydrolase 1 (Cd38) (Rattus norvegicus (Rat)).